A 509-amino-acid polypeptide reads, in one-letter code: Otolin-1 (509 aa).

Positions 1–25 are cleaved as a signal peptide; sequence MPSLRLLAILTTLLAVVLMATQSSA. Residues 23–96 are disordered; it reads SSATRTTRRP…AYSLSPTDST (74 aa). The span at 42–54 shows a compositional bias: gly residues; the sequence is RGGGTGGGGGGGD. The span at 62 to 75 shows a compositional bias: polar residues; that stretch reads RQTTTTMSPSSSLG. The N-linked (GlcNAc...) asparagine glycan is linked to asparagine 121. The 52-residue stretch at 193–244 folds into the Collagen-like 1 domain; sequence GDKGDQGDTGMPGAPGILGKEGQKGDLGPKGEKGETGLPGLKGDLGERGKPG. Residues 202–372 form a disordered region; sequence GMPGAPGILG…GPKGPQGETA (171 aa). Over residues 213–227 the composition is skewed to basic and acidic residues; it reads EGQKGDLGPKGEKGE. Asparagine 246 and asparagine 311 each carry an N-linked (GlcNAc...) asparagine glycan. The Collagen-like 2 domain maps to 285–329; sequence GEKGEKGEAGLPGPPGPRGSVGPPGVNGSNGLPGPVGLRGQLGSP. Low complexity predominate over residues 302–322; the sequence is RGSVGPPGVNGSNGLPGPVGL. Gly residues predominate over residues 327 to 342; it reads GSPGGKGEAGGRGPPG. The 138-residue stretch at 372–509 folds into the C1q domain; it reads AEQIRSAFSV…GFLLYADPKA (138 aa). N-linked (GlcNAc...) asparagine glycosylation occurs at asparagine 417.

Belongs to the OTOL1 family. Homooligomer; disulfide-linked; probably forms homotrimers. Interacts with otomp.

It localises to the secreted. It is found in the extracellular space. The protein localises to the extracellular matrix. In terms of biological role, collagen-like protein, which provides an organic scaffold for otoliths onto the sensory epithelium of the inner ear. Acts as a scaffold for biomineralization by sequestering calcium. The protein is Otolin-1 (Otol1) of Oncorhynchus mykiss (Rainbow trout).